The chain runs to 309 residues: MIFKRFVNLLVFLFLLGAGLLTFFLILSGGRESGTLKNFYWLQADTNGFNSAPSTTRWYNYNWCGYEDGQLANCSSRAPAKPFSPRDNFGNSVNLPSSFRNNRDTYYYLSRVGWAMLLISLFFIVLALVPGFLATFLPFKAVPVLYCVLSWLAFFFIILAACLYTGCYVKARKTFRNSGRSARLGPKNFAFIWTSVFLMLVNAIWSTIFSATHKAHSTYSDHDMYAQYESPSVDTGAQMEKSTYNSGATDGAGPITAAPVVGQPQPTTTTTPAGNGKFFQKLKTRKQVPSAELEPAGDGGLAGPVTVRD.

Over 1–5 (MIFKR) the chain is Cytoplasmic. A helical membrane pass occupies residues 6–26 (FVNLLVFLFLLGAGLLTFFLI). The Extracellular portion of the chain corresponds to 27 to 116 (LSGGRESGTL…YYLSRVGWAM (90 aa)). N-linked (GlcNAc...) asparagine glycosylation occurs at asparagine 73. The helical transmembrane segment at 117–137 (LLISLFFIVLALVPGFLATFL) threads the bilayer. The Cytoplasmic portion of the chain corresponds to 138–140 (PFK). Residues 141 to 161 (AVPVLYCVLSWLAFFFIILAA) form a helical membrane-spanning segment. Over 162–188 (CLYTGCYVKARKTFRNSGRSARLGPKN) the chain is Extracellular. A helical membrane pass occupies residues 189–209 (FAFIWTSVFLMLVNAIWSTIF). At 210–309 (SATHKAHSTY…GLAGPVTVRD (100 aa)) the chain is on the cytoplasmic side. Serine 230 and serine 232 each carry phosphoserine. Phosphothreonine is present on threonine 235. Residues 253-309 (GPITAAPVVGQPQPTTTTTPAGNGKFFQKLKTRKQVPSAELEPAGDGGLAGPVTVRD) are disordered. The span at 258–274 (APVVGQPQPTTTTTPAG) shows a compositional bias: low complexity.

Belongs to the SUR7 family.

It localises to the cell membrane. In terms of biological role, involved in sporulation and affects the sphingolipid composition of the plasma membrane. The chain is SUR7 family protein FMP45 (FMP45) from Saccharomyces cerevisiae (strain ATCC 204508 / S288c) (Baker's yeast).